Consider the following 187-residue polypeptide: Probable GTP-binding protein EngB (187 aa).

The 170-residue stretch at 18 to 187 (KNSEIAFWGR…KLKENINSNF (170 aa)) folds into the EngB-type G domain. Residues 26-33 (GRSNVGKS), 52-56 (GRTQL), 70-73 (DLPG), 137-140 (TKID), and 168-170 (VSS) contribute to the GTP site. Residues S33 and T54 each coordinate Mg(2+).

This sequence belongs to the TRAFAC class TrmE-Era-EngA-EngB-Septin-like GTPase superfamily. EngB GTPase family. Mg(2+) is required as a cofactor.

Its function is as follows. Necessary for normal cell division and for the maintenance of normal septation. This Mycoplasmopsis synoviae (strain 53) (Mycoplasma synoviae) protein is Probable GTP-binding protein EngB.